Consider the following 377-residue polypeptide: Tyrosine-protein phosphatase 2 (377 aa).

One can recognise a Tyrosine-protein phosphatase domain in the interval 27–347 (IDKEFNFILQ…RFCYLAISEA (321 aa)). The interval 77–137 (IDDDDDDEDD…EDHGGSGDEG (61 aa)) is disordered. Residues 78 to 91 (DDDDDDEDDNEDDI) are compositionally biased toward acidic residues. The span at 92 to 102 (IVSNNNNNNNN) shows a compositional bias: low complexity. Positions 113-123 (GSSGQSDVMSN) are enriched in polar residues. The Phosphocysteine intermediate role is filled by Cys-281.

The protein belongs to the protein-tyrosine phosphatase family. Non-receptor class subfamily.

The catalysed reaction is O-phospho-L-tyrosyl-[protein] + H2O = L-tyrosyl-[protein] + phosphate. The protein is Tyrosine-protein phosphatase 2 (ptpB) of Dictyostelium discoideum (Social amoeba).